Consider the following 34-residue polypeptide: Trypsin inhibitor 1 (34 aa).

A cross-link (cyclopeptide (Ser-Gly)) is located at residues 1 to 34 (SGSDGGVCPKILQRCRRDSDCPGACICRGNGYCG). Cystine bridges form between cysteine 8-cysteine 25, cysteine 15-cysteine 27, and cysteine 21-cysteine 33.

This is a cyclic peptide.

It is found in the secreted. In terms of biological role, inhibits trypsin; probably participates in a plant defense mechanism. This chain is Trypsin inhibitor 1, found in Momordica cochinchinensis (Spiny bitter cucumber).